The sequence spans 663 residues: Protein MICRORCHIDIA 6 (663 aa).

The segment at 1–77 (MSHDRSVNVS…PADDAGVTSS (77 aa)) is disordered. Positions 49–62 (SVGQSAGQSSTSVV) are enriched in polar residues. The short motif at 552–559 (KRKEHPDS) is the Nuclear localization signal element. Residues 614 to 659 (DRKVRSQNLEVKAMNLRSELENYKSEYERLMVELQALDLVKDEHRR) are a coiled coil.

The protein belongs to the MORC ATPase protein family. As to quaternary structure, homodimer and heterodimers with MORC1/CRT1 and MORC2. Interacts directly with SUVH9. Component of an RNA-directed DNA methylation (RdDM) complex that contains at least MORC6, MORC1/CRT1, MORC2, SWI3D and SUVH9. Stimulated by interaction with DMS3. Interacts with IDN2, SWI3B, SWI3C and SWI3D. The cofactor is Mg(2+). It depends on Mn(2+) as a cofactor.

The protein localises to the nucleus. Its activity is regulated as follows. Stimulated by DMS3. Functionally, involved in RNA-directed DNA methylation (RdDM) as a component of the RdDM machinery and required for gene silencing. Together with SUVH2 and SUVH9, regulates the silencing of some transposable elements (TEs). Exhibits ATPase activity. May also be involved in the regulation of chromatin architecture/condensation to maintain gene silencing. Binds DNA/RNA in a non-specific manner and exhibits endonuclease activity. Probably involved in DNA repair. Positive regulator of defense against the oomycete Hyaloperonospora arabidopsidis (Hpa). The chain is Protein MICRORCHIDIA 6 from Arabidopsis thaliana (Mouse-ear cress).